We begin with the raw amino-acid sequence, 692 residues long: UvrABC system protein B (692 aa).

The Helicase ATP-binding domain occupies 32-187; the sequence is ENIENGEKAQ…LLNDLVGIQF (156 aa). An ATP-binding site is contributed by 45-52; the sequence is GATGTGKT. The short motif at 98–121 is the Beta-hairpin element; sequence YYDYYQPEAYVPSSDTYIEKDSSV. Positions 436–631 constitute a Helicase C-terminal domain; it reads QIDDLVGEIH…TIKKEIRDLI (196 aa). Positions 656–691 constitute a UVR domain; the sequence is KALVKKLEKEMQQAAAALDFEGAAQLRDMVLELRAM.

This sequence belongs to the UvrB family. As to quaternary structure, forms a heterotetramer with UvrA during the search for lesions. Interacts with UvrC in an incision complex.

The protein resides in the cytoplasm. Functionally, the UvrABC repair system catalyzes the recognition and processing of DNA lesions. A damage recognition complex composed of 2 UvrA and 2 UvrB subunits scans DNA for abnormalities. Upon binding of the UvrA(2)B(2) complex to a putative damaged site, the DNA wraps around one UvrB monomer. DNA wrap is dependent on ATP binding by UvrB and probably causes local melting of the DNA helix, facilitating insertion of UvrB beta-hairpin between the DNA strands. Then UvrB probes one DNA strand for the presence of a lesion. If a lesion is found the UvrA subunits dissociate and the UvrB-DNA preincision complex is formed. This complex is subsequently bound by UvrC and the second UvrB is released. If no lesion is found, the DNA wraps around the other UvrB subunit that will check the other stand for damage. This is UvrABC system protein B from Lactococcus lactis subsp. cremoris (strain SK11).